A 1519-amino-acid polypeptide reads, in one-letter code: Dicer-like protein 1 (1519 aa).

Residues 1 to 13 show a composition bias toward polar residues; it reads MTHQNTETASLAT. The segment at 1 to 62 is disordered; sequence MTHQNTETAS…KDPSQRQRQQ (62 aa). The span at 39-48 shows a compositional bias: acidic residues; sequence SDESEGSEEE. The Helicase ATP-binding domain maps to 116–297; the sequence is LFERAKVQNT…EAARNLEALL (182 aa). 129-136 contacts ATP; the sequence is LDTGSGKT. Residues 242–245 carry the DEAH box motif; sequence DEAH. Positions 431 to 601 constitute a Helicase C-terminal domain; sequence ALSSKVRVLW…QLLPEDRILH (171 aa). Residues 634–724 form the Dicer dsRNA-binding fold domain; that stretch reads AITVLARYAS…NSVYHRRLPA (91 aa). Positions 882–1001 constitute a PAZ domain; the sequence is DDIEYQADMP…ICIEPLKISA (120 aa). RNase III domains are found at residues 1026–1184 and 1235–1387; these read GLEA…LTPG and CRRV…VDSN. Mg(2+) is bound by residues glutamate 1275, aspartate 1373, and glutamate 1376. Residues 1421 to 1489 enclose the DRBM domain; the sequence is TFLHNKLTNE…SENALTELLH (69 aa). Cysteine 1433, histidine 1460, cysteine 1501, and cysteine 1503 together coordinate Zn(2+).

Belongs to the helicase family. Dicer subfamily. It depends on Mg(2+) as a cofactor. Mn(2+) serves as cofactor.

Functionally, dicer-like endonuclease involved in cleaving double-stranded RNA in the RNA interference (RNAi) pathway. Produces 21 to 25 bp dsRNAs (siRNAs) which target the selective destruction of homologous RNAs leading to sequence-specific suppression of gene expression, called post-transcriptional gene silencing (PTGS). Part of a broad host defense response against viral infection and transposons. This chain is Dicer-like protein 1 (dcl1), found in Aspergillus terreus (strain NIH 2624 / FGSC A1156).